The following is a 784-amino-acid chain: ent-copalyl diphosphate synthase 2, chloroplastic (784 aa).

Residues 1-57 (MSMTLFASVTRPGLPGPTALRFPETRHLFHSVTAFAASFSPSKSSVGSSQCNATTPP) constitute a chloroplast transit peptide. Lys-242 lines the substrate pocket. Asp-379 and Asp-381 together coordinate Mg(2+). Residues 379 to 382 (DIDD) carry the DXDD motif motif. A substrate-binding site is contributed by Lys-466.

This sequence belongs to the terpene synthase family. Mg(2+) is required as a cofactor. Present in both leaves and flowers.

It is found in the plastid. Its subcellular location is the chloroplast. It participates in plant hormone biosynthesis; gibberellin biosynthesis. Its pathway is secondary metabolite biosynthesis; terpenoid biosynthesis. In terms of biological role, involved in the biosynthesis of labdane-type diterpenoid including marrubiin and other labdane-related furanoid diterpenoids with potential applications as anti-diabetics, analgesics or vasorelaxants. May be involved in the conversion of geranylgeranyl diphosphate (GGPP) to ent-copalyl diphosphate (ent-CPP) and 8-hydroxycopalyl diphosphate (LPP, labda-13-en-8-ol diphosphate). The chain is ent-copalyl diphosphate synthase 2, chloroplastic from Marrubium vulgare (White horehound).